Consider the following 336-residue polypeptide: MIDGYSPVLQSLLGTLLTWGLTAAGSALVFIFSSGQRQILDGSLGFAAGVMLAASYWSLLAPAIEMAENSNQYGSFAFVPAAVGFLVGAGFVYLADQLMPALGFSEDPYSIATLNQDSKPIKEKDEGDLYEDKELSIRIGRGGFHQDKIENGDVYQRKRGTVSPLAEDFSMLNPREAAHKGGSSWRRIMLLILAITIHNIPEGLAVGVGFGAIGKTPSATFENARNLALGIGIQNFPEGLAVSLPLRGAGVSTWKAFWYGQLSGMVEPIAGLLGTIAISLAEPLLPYALAFAAGAMVYVVTDDIIPEAQACGNGKLASWTCIFGFIVMMSLDVGLG.

The next 7 helical transmembrane spans lie at 12 to 32 (LLGT…VFIF), 44 to 64 (LGFA…APAI), 75 to 95 (SFAF…VYLA), 188 to 208 (IMLL…AVGV), 258 to 278 (WYGQ…TIAI), 280 to 300 (LAEP…VYVV), and 316 to 336 (LASW…VGLG).

It belongs to the ZIP transporter (TC 2.A.5) family.

It localises to the cell membrane. The protein resides in the nucleus. It is found in the cytoplasm. The protein localises to the golgi apparatus. Its function is as follows. Functions as a cellular zinc transporter. The sequence is that of Zinc transporter ZIP11 (slc39a11) from Xenopus tropicalis (Western clawed frog).